A 139-amino-acid polypeptide reads, in one-letter code: Putative nickel-responsive regulator (139 aa).

Ni(2+)-binding residues include histidine 79, histidine 90, histidine 92, and cysteine 98.

Belongs to the transcriptional regulatory CopG/NikR family. Ni(2+) serves as cofactor.

Its function is as follows. Transcriptional regulator. The polypeptide is Putative nickel-responsive regulator (Nitratidesulfovibrio vulgaris (strain DSM 19637 / Miyazaki F) (Desulfovibrio vulgaris)).